The sequence spans 276 residues: Diaminopimelate epimerase (276 aa).

Positions 13, 46, and 66 each coordinate substrate. Cys-75 serves as the catalytic Proton donor. Substrate-binding positions include 76–77 (GN), Asn-159, Asn-192, and 210–211 (ER). Cys-219 serves as the catalytic Proton acceptor. Residue 220-221 (GT) coordinates substrate.

This sequence belongs to the diaminopimelate epimerase family. In terms of assembly, homodimer.

The protein localises to the cytoplasm. The enzyme catalyses (2S,6S)-2,6-diaminopimelate = meso-2,6-diaminopimelate. Its pathway is amino-acid biosynthesis; L-lysine biosynthesis via DAP pathway; DL-2,6-diaminopimelate from LL-2,6-diaminopimelate: step 1/1. Its function is as follows. Catalyzes the stereoinversion of LL-2,6-diaminopimelate (L,L-DAP) to meso-diaminopimelate (meso-DAP), a precursor of L-lysine and an essential component of the bacterial peptidoglycan. This is Diaminopimelate epimerase from Pseudomonas putida (strain GB-1).